A 261-amino-acid chain; its full sequence is Small ribosomal subunit protein uS2 (261 aa).

At serine 2 the chain carries N-acetylserine. The tract at residues 215–261 is disordered; that stretch reads AEEAKTTEDVEEAAPVDADEWTGETEEVDWAESGATPAVEDAAASNW. Residues 223–244 are compositionally biased toward acidic residues; that stretch reads DVEEAAPVDADEWTGETEEVDW.

Belongs to the universal ribosomal protein uS2 family. In terms of assembly, component of the small ribosomal subunit. Mature ribosomes consist of a small (40S) and a large (60S) subunit. The 40S subunit contains about 33 different proteins and 1 molecule of RNA (18S). The 60S subunit contains about 49 different proteins and 3 molecules of RNA (25S, 5.8S and 5S). Interacts with RPS21.

The protein resides in the cytoplasm. In terms of biological role, required for the assembly and/or stability of the 40S ribosomal subunit. Required for the processing of the 20S rRNA-precursor to mature 18S rRNA in a late step of the maturation of 40S ribosomal subunits. The protein is Small ribosomal subunit protein uS2 of Scheffersomyces stipitis (strain ATCC 58785 / CBS 6054 / NBRC 10063 / NRRL Y-11545) (Yeast).